Reading from the N-terminus, the 198-residue chain is Recombination protein RecR (198 aa).

Residues 56-71 (CDTCGNVDTQNPCGIC) form a C4-type zinc finger. Positions 79 to 174 (KSICVVEDVA…RITQLAHGLP (96 aa)) constitute a Toprim domain.

This sequence belongs to the RecR family.

Functionally, may play a role in DNA repair. It seems to be involved in an RecBC-independent recombinational process of DNA repair. It may act with RecF and RecO. This chain is Recombination protein RecR, found in Erythrobacter litoralis (strain HTCC2594).